Consider the following 117-residue polypeptide: Immunoglobulin kappa variable 1-39 (117 aa).

The N-terminal stretch at 1 to 22 (MDMRVPAQLLGLLLLWLRGARC) is a signal peptide. The framework-1 stretch occupies residues 23-45 (DIQMTQSPSSLSASVGDRVTITC). In terms of domain architecture, Ig-like spans 24 to 117 (IQMTQSPSSL…YYCQQSYSTP (94 aa)). Cys-45 and Cys-110 are joined by a disulfide. Residues 46–56 (RASQSISSYLN) form a complementarity-determining-1 region. Residues 57–71 (WYQQKPGKAPKLLIY) form a framework-2 region. The tract at residues 72 to 78 (AASSLQS) is complementarity-determining-2. The interval 79–110 (GVPSRFSGSGSGTDFTLTISSLQPEDFATYYC) is framework-3. A complementarity-determining-3 region spans residues 111 to 117 (QQSYSTP).

Immunoglobulins are composed of two identical heavy chains and two identical light chains; disulfide-linked.

The protein resides in the secreted. It localises to the cell membrane. Functionally, v region of the variable domain of immunoglobulin light chains that participates in the antigen recognition. Immunoglobulins, also known as antibodies, are membrane-bound or secreted glycoproteins produced by B lymphocytes. In the recognition phase of humoral immunity, the membrane-bound immunoglobulins serve as receptors which, upon binding of a specific antigen, trigger the clonal expansion and differentiation of B lymphocytes into immunoglobulins-secreting plasma cells. Secreted immunoglobulins mediate the effector phase of humoral immunity, which results in the elimination of bound antigens. The antigen binding site is formed by the variable domain of one heavy chain, together with that of its associated light chain. Thus, each immunoglobulin has two antigen binding sites with remarkable affinity for a particular antigen. The variable domains are assembled by a process called V-(D)-J rearrangement and can then be subjected to somatic hypermutations which, after exposure to antigen and selection, allow affinity maturation for a particular antigen. This Homo sapiens (Human) protein is Immunoglobulin kappa variable 1-39.